A 227-amino-acid polypeptide reads, in one-letter code: PKHD-type hydroxylase Dtpsy_0528 (227 aa).

The region spanning threonine 78–serine 178 is the Fe2OG dioxygenase domain. Fe cation-binding residues include histidine 96, aspartate 98, and histidine 159. Arginine 169 lines the 2-oxoglutarate pocket.

It depends on Fe(2+) as a cofactor. L-ascorbate is required as a cofactor.

This Acidovorax ebreus (strain TPSY) (Diaphorobacter sp. (strain TPSY)) protein is PKHD-type hydroxylase Dtpsy_0528.